Reading from the N-terminus, the 633-residue chain is MQNDQQRFSLQNRTVLAHPYKRLGGAFTVKSPSVPNFHDKMHSDHSSSDSALVNGSFRANDHRSVEPSCLGQASPSEHDGNLSVIDLYGDEVESQRAEGEDDDDNNGDNGNEDLEEVHSDDLDLVPDDDNRQRVELEGAASATSANSNGINNTHFDRYGFKKQNNYISEAEYDKWWVEYSQYCVRRKHKWQLLLEKSGLPVTDDSPSRFPSKSERLKRYVRKGIPAEWRGNAWWHFARGQEKLNKNKGVYSQLLRKMKQIKKQNPNEKQVQDLDIIERDLNRTFPDNIHFQSSLHNKEGPPIIKSLRRVLVAFSLYNPKIGYCQSMNFLAGLLLLFLDEERAFWMLVIITSRYLPGVHNINLEGVNIDQGVLMLCVKEYIPEVWSYIKPSIDHHQKNNKTFSPSNKKVLFNMQKNEFLYRLPPITLCTASWFMSCFVGVVPIETTLRIWDCLFYEESHFLFKVSLAVLKLSEHDLSKIKPRNNSLNYSWGSNLNQRGGSMGQEDSDMEIFQVIQTFPKTLLNPNEIFEKIIFKRRFNLNRLDQDEIDRCRKFVAAQRLKFKTYGELLGNSTSEADLPINDNTDNKGIHITSDAVNEALSSEVYGFKKSLAGVHWNNSIKEKVKQMRKKKDKGD.

The interval 26 to 127 (AFTVKSPSVP…HSDDLDLVPD (102 aa)) is disordered. A compositionally biased stretch (basic and acidic residues) spans 37–47 (FHDKMHSDHSS). The segment covering 99-115 (GEDDDDNNGDNGNEDLE) has biased composition (acidic residues). Position 147 is a phosphoserine (serine 147). The Rab-GAP TBC domain occupies 223-456 (GIPAEWRGNA…RIWDCLFYEE (234 aa)). Residue serine 484 is modified to Phosphoserine.

Its subcellular location is the cytoplasm. The protein resides in the bud. The protein localises to the bud neck. In terms of biological role, regulates exocytosis by functioning as a GAP for SEC4. Stimulates specifically the GTPase activity of YPT6. Also required for efficient polarization of the actin patches. This is GTPase-activating protein GYP3 (MSB3) from Saccharomyces cerevisiae (strain ATCC 204508 / S288c) (Baker's yeast).